A 915-amino-acid polypeptide reads, in one-letter code: Protein O-mannosyl-transferase TMTC3 (915 aa).

At 1-8 the chain is on the cytoplasmic side; it reads MANINLKE. The chain crosses the membrane as a helical span at residues 9–29; it reads ITLIVGVVTACYWNSLFCGFV. The Extracellular segment spans residues 30-93; the sequence is FDDVSAILDN…LSELKPMSYH (64 aa). A helical transmembrane segment spans residues 94–114; that stretch reads LLNMIFHAVVSVIFLKVCKLF. Over 115-120 the chain is Cytoplasmic; that stretch reads LDNKSS. Transmembrane regions (helical) follow at residues 121–139 and 140–158; these read VIAS…AVTG and VVGR…AFLS. Residues 159–166 lie on the Cytoplasmic side of the membrane; that stretch reads YTRSKGPD. The helical transmembrane segment at 167–187 threads the bilayer; that stretch reads NSIIWTPIALTVFLVAVATLC. Topologically, residues 188 to 193 are extracellular; the sequence is KEQGIT. A helical transmembrane segment spans residues 194 to 214; sequence VVGICCVYEVFIAQGYTLPLL. The Cytoplasmic segment spans residues 215 to 231; the sequence is CTTAGQFLRGKGSIPFS. A helical transmembrane segment spans residues 232–252; the sequence is MLQTLVKLIVLMFSTLLLVVI. The Extracellular segment spans residues 253-317; the sequence is RVQVIQSQLP…TIPLIESLLD (65 aa). The chain crosses the membrane as a helical span at residues 318 to 338; the sequence is IRNLATFTFFCFLGMLGVFSI. The Cytoplasmic portion of the chain corresponds to 339–353; the sequence is RYSGDSSKTVLMALC. A helical membrane pass occupies residues 354–374; the sequence is LMALPFIPASNLFFPVGFVVA. Over 375-376 the chain is Extracellular; that stretch reads ER. Residues 377–397 traverse the membrane as a helical segment; the sequence is VLYVPSMGFCILVAHGWQKIS. The Cytoplasmic portion of the chain corresponds to 398 to 404; the sequence is TKSVFKK. A helical membrane pass occupies residues 405–423; that stretch reads LSWICLSMVILTHSLKTFH. Over 424–915 the chain is Extracellular; sequence RNWDWESEYT…EEIERILNGE (492 aa). 9 TPR repeats span residues 446-479, 480-513, 529-562, 563-596, 597-631, 669-702, 703-736, 738-771, and 772-805; these read AKLW…QPDD, IGAH…MPQI, NVYI…RPDF, KQAY…DRNN, ADLW…NPKH, ANGY…QADF, RSAL…YPDH, KGLI…DPSN, and VQGK…APHE. N-linked (GlcNAc...) asparagine glycosylation is present at N494. Position 503 is a phosphotyrosine (Y503). N-linked (GlcNAc...) asparagine glycosylation is present at N541. The segment at 848-892 is disordered; that stretch reads KEIRGESRQTQIVKTSDNKSQSKSNKQLGKNGDEETPHKTTKDIK. N865 carries an N-linked (GlcNAc...) asparagine glycan. Positions 865-874 are enriched in low complexity; that stretch reads NKSQSKSNKQ. Positions 878–892 are enriched in basic and acidic residues; it reads NGDEETPHKTTKDIK.

The protein belongs to the TMTC family.

The protein localises to the membrane. It is found in the endoplasmic reticulum. The catalysed reaction is a di-trans,poly-cis-dolichyl beta-D-mannosyl phosphate + L-seryl-[protein] = 3-O-(alpha-D-mannosyl)-L-seryl-[protein] + a di-trans,poly-cis-dolichyl phosphate + H(+). It carries out the reaction a di-trans,poly-cis-dolichyl beta-D-mannosyl phosphate + L-threonyl-[protein] = 3-O-(alpha-D-mannosyl)-L-threonyl-[protein] + a di-trans,poly-cis-dolichyl phosphate + H(+). It participates in protein modification; protein glycosylation. Functionally, transfers mannosyl residues to the hydroxyl group of serine or threonine residues. The 4 members of the TMTC family are O-mannosyl-transferases dedicated primarily to the cadherin superfamily, each member seems to have a distinct role in decorating the cadherin domains with O-linked mannose glycans at specific regions. Also acts as O-mannosyl-transferase on other proteins such as PDIA3. Involved in the positive regulation of proteasomal protein degradation in the endoplasmic reticulum (ER), and the control of ER stress response. The sequence is that of Protein O-mannosyl-transferase TMTC3 from Homo sapiens (Human).